The following is a 76-amino-acid chain: UPF0154 protein LCA_1273 (76 aa).

A helical membrane pass occupies residues Ile-3 to Phe-23. The segment at Pro-55–Lys-76 is disordered.

The protein belongs to the UPF0154 family.

It localises to the cell membrane. This chain is UPF0154 protein LCA_1273, found in Latilactobacillus sakei subsp. sakei (strain 23K) (Lactobacillus sakei subsp. sakei).